A 576-amino-acid polypeptide reads, in one-letter code: Arginine--tRNA ligase (576 aa).

The short motif at P122–H132 is the 'HIGH' region element.

This sequence belongs to the class-I aminoacyl-tRNA synthetase family. Monomer.

The protein resides in the cytoplasm. It carries out the reaction tRNA(Arg) + L-arginine + ATP = L-arginyl-tRNA(Arg) + AMP + diphosphate. In Photobacterium profundum (strain SS9), this protein is Arginine--tRNA ligase.